We begin with the raw amino-acid sequence, 408 residues long: Serine/threonine-protein kinase ATG1t (408 aa).

A Protein kinase domain is found at 7-272 (YIAKSKLSES…GRIKNSRVWV (266 aa)). ATP-binding positions include 13–21 (LSESLTSTV) and K36. Catalysis depends on D129, which acts as the Proton acceptor.

The protein belongs to the protein kinase superfamily. Ser/Thr protein kinase family.

The protein localises to the cytoplasmic vesicle. The protein resides in the autophagosome. Its function is as follows. Serine/threonine protein kinase involved in autophagy. The ATG1-ATG13 protein kinase complex regulates downstream events required for autophagosome enclosure and/or vacuolar delivery. The chain is Serine/threonine-protein kinase ATG1t from Arabidopsis thaliana (Mouse-ear cress).